Here is a 197-residue protein sequence, read N- to C-terminus: MSSSLPLHPLLDNGISQGKPNFPGGKLYCHCASNKVEITLTSDVLHNHACGCSKCWKPKGSIFSVVGVVPTSALSVTANASKLAIIDKNAPIQRYACKECGVHLYGRIEVEHPFKGLDFVHVELSEGGGKEGWQGVQFAGFVSSLIGQGLDPELVPGVRERLKSLGLENYDALSPPLMDAIATWNAKRDGVVFRSSL.

In terms of domain architecture, CENP-V/GFA spans 22–171 (FPGGKLYCHC…LKSLGLENYD (150 aa)). Positions 29, 31, 50, 52, 55, 97, and 100 each coordinate Zn(2+).

The protein belongs to the Gfa family. It depends on Zn(2+) as a cofactor.

It carries out the reaction S-(hydroxymethyl)glutathione = glutathione + formaldehyde. It participates in one-carbon metabolism; formaldehyde degradation; formate from formaldehyde (glutathione route): step 1/3. Functionally, catalyzes the condensation of formaldehyde and glutathione to S-hydroxymethylglutathione. The polypeptide is Putative glutathione-dependent formaldehyde-activating enzyme (Emericella nidulans (strain FGSC A4 / ATCC 38163 / CBS 112.46 / NRRL 194 / M139) (Aspergillus nidulans)).